Reading from the N-terminus, the 256-residue chain is GDSL esterase/lipase At1g18120 (256 aa).

Residues 1 to 49 (MYRVYKNNKFILISIPRITNKLWQKNCNLVILLGVLLVLTLFHDPIIVA) form the signal peptide. Catalysis depends on Ser67, which acts as the Nucleophile. N-linked (GlcNAc...) asparagine glycosylation occurs at Asn181.

This sequence belongs to the 'GDSL' lipolytic enzyme family.

Its subcellular location is the secreted. In Arabidopsis thaliana (Mouse-ear cress), this protein is GDSL esterase/lipase At1g18120.